We begin with the raw amino-acid sequence, 436 residues long: tRNA pseudouridine synthase Pus10 (436 aa).

Asp254 acts as the Nucleophile in catalysis. The substrate site is built by Tyr322 and Tyr394.

This sequence belongs to the pseudouridine synthase Pus10 family.

The enzyme catalyses uridine(54) in tRNA = pseudouridine(54) in tRNA. It catalyses the reaction uridine(55) in tRNA = pseudouridine(55) in tRNA. Its function is as follows. Responsible for synthesis of pseudouridine from uracil-54 and uracil-55 in the psi GC loop of transfer RNAs. This Methanopyrus kandleri (strain AV19 / DSM 6324 / JCM 9639 / NBRC 100938) protein is tRNA pseudouridine synthase Pus10.